A 397-amino-acid chain; its full sequence is Lysophospholipid transporter LplT (397 aa).

The Periplasmic portion of the chain corresponds to 1-17 (MSESVHTNTSLWSKGMK). Residues 18 to 38 (AVIVAQFLSAFGDNALLFATL) form a helical membrane-spanning segment. At 39 to 52 (ALLKAQFYPEWSQP) the chain is on the cytoplasmic side. Residues 53-73 (ILQMVFVGAYILFAPFVGQVA) traverse the membrane as a helical segment. Topologically, residues 74–90 (DSFAKGRVMMFANGLKL) are periplasmic. The helical transmembrane segment at 91 to 111 (LGAASICFGINPFLGYTLVGV) threads the bilayer. At 112 to 144 (GAAAYSPAKYGILGELTTGSKLVKANGLMEAST) the chain is on the cytoplasmic side. A helical membrane pass occupies residues 145-165 (IAAILLGSVAGGVLADWHILV). Position 166 (Ala-166) is a topological domain, periplasmic. Residues 167–187 (LAACALAYGGAVVANIYIPKL) form a helical membrane-spanning segment. Topologically, residues 188–226 (AAARPGQSWNLISMTRSFLNACTSLWRNGETRFSLVGTS) are cytoplasmic. A helical membrane pass occupies residues 227–247 (LFWGAGVTLRFLLVLWVPVAL). At 248–256 (GITDNATPT) the chain is on the periplasmic side. Residues 257-277 (YLNAMVAIGIVVGAGAAAKLV) form a helical membrane-spanning segment. Residues 278-280 (TLE) are Cytoplasmic-facing. A helical transmembrane segment spans residues 281 to 301 (TVSRCMPAGILIGVVVLIFSL). At 302–304 (QHE) the chain is on the periplasmic side. A helical transmembrane segment spans residues 305 to 325 (LLPAYALLMLIGVLGGFFVVP). Topologically, residues 326–343 (LNALLQERGKKSVGAGNA) are cytoplasmic. Residues 344 to 364 (IAVQNLGENSAMLLMLGIYSL) traverse the membrane as a helical segment. Over 365 to 366 (AV) the chain is Periplasmic. Residues 367 to 387 (MVGIPVVPIGIGFGALFALAI) traverse the membrane as a helical segment. Over 388 to 397 (TALWIWQRRH) the chain is Cytoplasmic.

This sequence belongs to the major facilitator superfamily. LplT (TC 2.A.1.42) family.

The protein localises to the cell inner membrane. Functionally, catalyzes the facilitated diffusion of 2-acyl-glycero-3-phosphoethanolamine (2-acyl-GPE) into the cell. This chain is Lysophospholipid transporter LplT, found in Escherichia coli O6:K15:H31 (strain 536 / UPEC).